The chain runs to 597 residues: MKHIRNFSIIAHIDHGKSTLSDRLIQVCGGLSEREMAAQVLDSMDIERERGITIKAQSVTLDYKAKDGETYQLNFIDTPGHVDFSYEVSRSLAACEGALLVVDAGQGVEAQTLANCYTAIEMELEVVPILNKIDLPAAEPERVAEEIEEIVGIDAMEATRCSAKTGIGVDDVLENIVTAIPPPEGDPEAPLQALIIDSWFDNYLGVVSLVRIKNGKLKKNDKIKVMSTDQVWGVDRLGIFTPKQIDTTELNTGEVGWVVCGIKDILGAPVGDTLTLAKGGSTERLPGFQKVKPQVYAGLFPVSSDDYENFRDALGKLSLNDASLFYEPESSAALGFGFRCGFLGMLHMEIIQERLEREYDLDLITTAPTVVYEVVKTDKTVLYVDSPAKLPAINDLEEIREPIARCNILVPSDYLGNVITLCVEKRGVQVDMVYHGNQVAVTYDLPMAEVVLDFFDRLKSTSRGYASLDYNFQRYEASNMVRVDVLLNGETVDALAIITHKDIAQSRGRLLVEKMKEFIPRQMFDIAIQAAIGNHIIARSTVKQLRKNVIAKCYGGDISRKKKLLKKQKEGKKRMKQIGNVELPQEAFLAILHVGKD.

In terms of domain architecture, tr-type G spans 2–184 (KHIRNFSIIA…NIVTAIPPPE (183 aa)). Residues 14-19 (DHGKST) and 131-134 (NKID) contribute to the GTP site.

Belongs to the TRAFAC class translation factor GTPase superfamily. Classic translation factor GTPase family. LepA subfamily.

It is found in the cell inner membrane. The enzyme catalyses GTP + H2O = GDP + phosphate + H(+). In terms of biological role, required for accurate and efficient protein synthesis under certain stress conditions. May act as a fidelity factor of the translation reaction, by catalyzing a one-codon backward translocation of tRNAs on improperly translocated ribosomes. Back-translocation proceeds from a post-translocation (POST) complex to a pre-translocation (PRE) complex, thus giving elongation factor G a second chance to translocate the tRNAs correctly. Binds to ribosomes in a GTP-dependent manner. The sequence is that of Elongation factor 4 from Vibrio atlanticus (strain LGP32) (Vibrio splendidus (strain Mel32)).